The primary structure comprises 45 residues: Large ribosomal subunit protein bL34 (45 aa).

The segment covering 1-20 (MSKRTYQPNKRKRLKTHGFR) has biased composition (basic residues). The disordered stretch occupies residues 1 to 45 (MSKRTYQPNKRKRLKTHGFRSRMSTASGRRIISCRRRKNRETLTA).

Belongs to the bacterial ribosomal protein bL34 family.

The protein is Large ribosomal subunit protein bL34 of Tropheryma whipplei (strain Twist) (Whipple's bacillus).